The following is a 502-amino-acid chain: Protein DETOXIFICATION 49 (502 aa).

12 helical membrane-spanning segments follow: residues 41 to 61 (LPLI…MLFL), 75 to 95 (LALG…SIGM), 123 to 143 (LLCS…LLFF), 153 to 173 (AEIF…LHPI), 190 to 210 (AFFA…SLGL), 216 to 236 (ALGA…YIVF), 267 to 287 (VSVC…GLLL), 293 to 313 (VASM…PSSL), 338 to 358 (RTGL…ALMV), 372 to 392 (IVKL…GNCP), 414 to 434 (LCCF…FSGF), and 439 to 459 (LWLG…VVLA).

It belongs to the multi antimicrobial extrusion (MATE) (TC 2.A.66.1) family.

Its subcellular location is the membrane. The chain is Protein DETOXIFICATION 49 from Arabidopsis thaliana (Mouse-ear cress).